Here is a 905-residue protein sequence, read N- to C-terminus: Protein translocase subunit SecA (905 aa).

Residues Gln-87, 105-109 (GEGKT), and Asp-509 contribute to the ATP site. 4 residues coordinate Zn(2+): Cys-890, Cys-892, Cys-901, and His-902.

Belongs to the SecA family. Monomer and homodimer. Part of the essential Sec protein translocation apparatus which comprises SecA, SecYEG and auxiliary proteins SecDF-YajC and YidC. Zn(2+) is required as a cofactor.

The protein localises to the cell inner membrane. It is found in the cytoplasm. The catalysed reaction is ATP + H2O + cellular proteinSide 1 = ADP + phosphate + cellular proteinSide 2.. In terms of biological role, part of the Sec protein translocase complex. Interacts with the SecYEG preprotein conducting channel. Has a central role in coupling the hydrolysis of ATP to the transfer of proteins into and across the cell membrane, serving both as a receptor for the preprotein-SecB complex and as an ATP-driven molecular motor driving the stepwise translocation of polypeptide chains across the membrane. In Acinetobacter baylyi (strain ATCC 33305 / BD413 / ADP1), this protein is Protein translocase subunit SecA.